Consider the following 426-residue polypeptide: 5-methylthioadenosine/S-adenosylhomocysteine deaminase (426 aa).

Zn(2+) is bound by residues histidine 60 and histidine 62. 2 residues coordinate substrate: glutamate 89 and histidine 179. A Zn(2+)-binding site is contributed by histidine 206. Residues glutamate 209 and aspartate 294 each coordinate substrate. Aspartate 294 lines the Zn(2+) pocket.

The protein belongs to the metallo-dependent hydrolases superfamily. MTA/SAH deaminase family. Zn(2+) is required as a cofactor.

It catalyses the reaction S-adenosyl-L-homocysteine + H2O + H(+) = S-inosyl-L-homocysteine + NH4(+). The catalysed reaction is S-methyl-5'-thioadenosine + H2O + H(+) = S-methyl-5'-thioinosine + NH4(+). Functionally, catalyzes the deamination of 5-methylthioadenosine and S-adenosyl-L-homocysteine into 5-methylthioinosine and S-inosyl-L-homocysteine, respectively. Is also able to deaminate adenosine. The polypeptide is 5-methylthioadenosine/S-adenosylhomocysteine deaminase (Dictyoglomus thermophilum (strain ATCC 35947 / DSM 3960 / H-6-12)).